Consider the following 494-residue polypeptide: Nuclear distribution protein PAC1 (494 aa).

Residues 14–46 (QKNELDKSVLRYLNWNYKQTVRHEHAQDYESVR) enclose the LisH domain. The stretch at 90-123 (NSIVRLQKKIIELEQNTETLVSQIKDLNTQVSEL) forms a coiled coil. WD repeat units follow at residues 153-192 (NVES…IPLA), 196-244 (SHTK…CKFQ), 251-292 (GHEH…SLKT), 295-334 (PHSQ…SVGT), 347-395 (HFIE…LMAH), 415-454 (GHLS…HVWE), and 457-492 (HTGF…SNVF).

Belongs to the WD repeat LIS1/nudF family. Self-associates. Interacts with NDL1 and dynein.

The protein localises to the cytoplasm. The protein resides in the cytoskeleton. It is found in the spindle pole. Positively regulates the activity of the minus-end directed microtubule motor protein dynein. Plays a central role in positioning the mitotic spindle at the bud neck during cell division. Targets cytoplasmic dynein to microtubule plus ends, thereby promoting dynein-mediated microtubule sliding along the bud cortex and consequently the movement of the mitotic spindle to the bud neck. This is Nuclear distribution protein PAC1 from Saccharomyces cerevisiae (strain RM11-1a) (Baker's yeast).